Reading from the N-terminus, the 249-residue chain is Thrombin-like enzyme barnettobin (249 aa).

The first 10 residues, 1-10 (APKELQVSYA), serve as a signal peptide directing secretion. Positions 11-16 (HKSSEL) are excised as a propeptide. The Peptidase S1 domain occupies 17-240 (VIGGDECDIN…YPPWIQSIIA (224 aa)). 6 cysteine pairs are disulfide-bonded: C23-C154, C41-C57, C89-C247, C133-C201, C165-C180, and C191-C216. Catalysis depends on charge relay system residues H56 and D101. N-linked (GlcNAc...) asparagine glycans are attached at residues N145 and N161. Residue S195 is the Charge relay system of the active site. A glycan (N-linked (GlcNAc...) asparagine) is linked at N242.

It belongs to the peptidase S1 family. Snake venom subfamily. As to quaternary structure, monomer. Glycoprotein, contains approx. 52% carbohydrate which could be removed by N-glycosidase. Glycosylation is important, since deglycosylated barnettobin loses its clotting and defibrinogenating effects. Expressed by the venom gland.

The protein localises to the secreted. Both coagulant and amidolytic activities are inhibited by PMSF. Amidolytic activity is partially inhibited by DTT, chymostatin, SBTI and TLCK, but not by heparin and EDTA. In terms of biological role, thrombin-like snake venom serine protease that releases only fibrinopeptide A from human Aalpha chain of fibrinogen (specific coagulant activity was 251.7 NIH thrombin units/mg). Also shows fibrino(geno)lytic activities in vitro and defibrinogenating effects in vivo. The sequence is that of Thrombin-like enzyme barnettobin from Bothrops barnetti (Barnett's lancehead).